Reading from the N-terminus, the 177-residue chain is Alkyl hydroperoxide reductase AhpD (177 aa).

Cysteine 130 serves as the catalytic Proton donor. A disulfide bridge links cysteine 130 with cysteine 133. Cysteine 133 acts as the Cysteine sulfenic acid (-SOH) intermediate in catalysis.

The protein belongs to the AhpD family. Homotrimer.

It carries out the reaction N(6)-[(R)-dihydrolipoyl]-L-lysyl-[lipoyl-carrier protein] + a hydroperoxide = N(6)-[(R)-lipoyl]-L-lysyl-[lipoyl-carrier protein] + an alcohol + H2O. Its function is as follows. Antioxidant protein with alkyl hydroperoxidase activity. Required for the reduction of the AhpC active site cysteine residues and for the regeneration of the AhpC enzyme activity. The sequence is that of Alkyl hydroperoxide reductase AhpD from Mycolicibacterium smegmatis (strain ATCC 700084 / mc(2)155) (Mycobacterium smegmatis).